A 300-amino-acid chain; its full sequence is Ubiquinone biosynthesis protein COQ4, mitochondrial (300 aa).

4 residues coordinate Zn(2+): His-173, Asp-174, His-177, and Glu-189.

Belongs to the COQ4 family. Component of a multi-subunit COQ enzyme complex, composed of at least COQ3, COQ4, COQ5, COQ6, COQ7 and COQ9. Zn(2+) is required as a cofactor.

It localises to the mitochondrion inner membrane. It carries out the reaction a 4-hydroxy-3-methoxy-5-(all-trans-polyprenyl)benzoate + H(+) = a 2-methoxy-6-(all-trans-polyprenyl)phenol + CO2. It functions in the pathway cofactor biosynthesis; ubiquinone biosynthesis. In terms of biological role, lyase that catalyzes the C1-decarboxylation of 4-hydroxy-3-methoxy-5-(all-trans-polyprenyl)benzoic acid into 2-methoxy-6-(all-trans-polyprenyl)phenol during ubiquinone biosynthesis. The sequence is that of Ubiquinone biosynthesis protein COQ4, mitochondrial from Cryptococcus neoformans var. neoformans serotype D (strain B-3501A) (Filobasidiella neoformans).